Reading from the N-terminus, the 447-residue chain is MREIVHIQAGQCGNQIGAKFWEIISDEHGIDATGAYHGDSDLQLERINVYYNEASGGKYVPRAVLVDLEPGTMDSVRSGPFGQIFRPDNFVFGQSGAGNNWAKGHYTEGAELVDSVLDVVRKEAESCDCLQGFQLTHSLGGGTGSGMGTLLISKIREEYPDRIMNTYSVVPSPKVSDTVVEPYNATLSVHQLVENTDETYCIDNEALYDICFRTLKLTTPTYGDLNHLVSLTMSGVTTCLRFPGQLNADLRKLAVNMVPFPRLHFFMPGFAPLTSRGSQQYRALTVPELTQQMFDAKNMMAACDPRHGRYLTVAAIFRGRMSMKEVDEQMLNIQNKNSSYFVEWIPNNVKTAVCDIPPRGLKMSATFIGNSTAIQELFKRISEQFTAMFRRKAFLHWYTGEGMDEMEFTEAESNMNDLVSEYQQYQEATADEDAEFEEEQEAEVDEN.

Gln11 is a binding site for GTP. Ser40 bears the Phosphoserine mark. 7 residues coordinate GTP: Glu69, Ser138, Gly142, Thr143, Gly144, Asn204, and Asn226. A Mg(2+)-binding site is contributed by Glu69. At Ser339 the chain carries Phosphoserine. Positions 427-447 (EATADEDAEFEEEQEAEVDEN) are disordered. A compositionally biased stretch (acidic residues) spans 429 to 447 (TADEDAEFEEEQEAEVDEN).

It belongs to the tubulin family. In terms of assembly, dimer of alpha and beta chains. A typical microtubule is a hollow water-filled tube with an outer diameter of 25 nm and an inner diameter of 15 nM. Alpha-beta heterodimers associate head-to-tail to form protofilaments running lengthwise along the microtubule wall with the beta-tubulin subunit facing the microtubule plus end conferring a structural polarity. Microtubules usually have 13 protofilaments but different protofilament numbers can be found in some organisms and specialized cells. Interacts with mgr and Vhl. Requires Mg(2+) as cofactor.

It localises to the cytoplasm. It is found in the cytoskeleton. Tubulin is the major constituent of microtubules, a cylinder consisting of laterally associated linear protofilaments composed of alpha- and beta-tubulin heterodimers. Microtubules grow by the addition of GTP-tubulin dimers to the microtubule end, where a stabilizing cap forms. Below the cap, tubulin dimers are in GDP-bound state, owing to GTPase activity of alpha-tubulin. In Drosophila melanogaster (Fruit fly), this protein is Tubulin beta-1 chain (betaTub56D).